The following is a 372-amino-acid chain: Innexin-16 (372 aa).

Transmembrane regions (helical) follow at residues 31 to 51 (VVTT…NYVG), 106 to 126 (VPFL…FWII), 181 to 201 (LVMK…LNSF), and 263 to 283 (IFIF…GDFV). Asn-352 carries N-linked (GlcNAc...) asparagine glycosylation.

It belongs to the pannexin family.

The protein resides in the cell membrane. It localises to the cell junction. The protein localises to the gap junction. Functionally, structural component of the gap junctions. Required for signals downstream of defecation clock. The chain is Innexin-16 (inx-16) from Caenorhabditis elegans.